Consider the following 175-residue polypeptide: UPF0398 protein SPP_0409 (175 aa).

Belongs to the UPF0398 family.

The protein is UPF0398 protein SPP_0409 of Streptococcus pneumoniae (strain P1031).